A 263-amino-acid polypeptide reads, in one-letter code: Alpha-tubulin N-acetyltransferase 2 (263 aa).

In terms of domain architecture, N-acetyltransferase spans 1–181 (MEIAFDLSTI…NKYALCSNFF (181 aa)). 115–128 (FFVVPTEQRSGNGF) is an acetyl-CoA binding site. Disordered regions lie at residues 191-223 (TPRQTKRASRASSAVSSHASSRNTSPIGRNRPR) and 242-263 (EVDPNSPTGLKNARDFGHRRIW). Over residues 200–212 (RASSAVSSHASSR) the composition is skewed to low complexity. The segment covering 253–263 (NARDFGHRRIW) has biased composition (basic and acidic residues).

It belongs to the acetyltransferase ATAT1 family. In terms of tissue distribution, expressed in touch receptor neurons and in a subset of ciliated neurons, including PDE, ADE, CEP, and OLQ neurons.

It carries out the reaction L-lysyl-[alpha-tubulin] + acetyl-CoA = N(6)-acetyl-L-lysyl-[alpha-tubulin] + CoA + H(+). Functionally, specifically acetylates 'Lys-40' in alpha-tubulin/mec-12 on the lumenal side of microtubules. Promotes microtubule destabilization and accelerates microtubule dynamics; this activity may be independent of acetylation activity. Acetylates alpha-tubulin with a slow enzymatic rate, due to a catalytic site that is not optimized for acetyl transfer. Enters the microtubule through each end and diffuses quickly throughout the lumen of microtubules. Acetylates only long/old microtubules because of its slow acetylation rate since it does not have time to act on dynamically unstable microtubules before the enzyme is released. Required for the maintenance of touch receptor neurons and possibly other type of neurons involved in locomotion. This is Alpha-tubulin N-acetyltransferase 2 (atat-2) from Caenorhabditis elegans.